A 129-amino-acid polypeptide reads, in one-letter code: MGRRILNDALRTIVNAERRGKASVELKPISTVMSSFLRIMKEKGYIKNFQVYDPHRVGRITVDLQGRVNDCKALTYRQDVRAKEIEKYTERTLPTRQWGYVVITTPDGILDHEEAIKRNVGGQVLGFFY.

Belongs to the universal ribosomal protein uS8 family. In terms of assembly, component of the mitochondrial ribosome small subunit.

The protein localises to the mitochondrion. In Arabidopsis thaliana (Mouse-ear cress), this protein is Small ribosomal subunit protein uS8my (RPS15AE).